Here is a 288-residue protein sequence, read N- to C-terminus: Sulfur carrier protein FdhD (288 aa).

Cysteine 122 serves as the catalytic Cysteine persulfide intermediate. Phenylalanine 268–arginine 273 is a binding site for Mo-bis(molybdopterin guanine dinucleotide).

The protein belongs to the FdhD family.

The protein localises to the cytoplasm. Its function is as follows. Required for formate dehydrogenase (FDH) activity. Acts as a sulfur carrier protein that transfers sulfur from IscS to the molybdenum cofactor prior to its insertion into FDH. This Anaeromyxobacter dehalogenans (strain 2CP-C) protein is Sulfur carrier protein FdhD.